A 367-amino-acid chain; its full sequence is Alanine racemase (367 aa).

Lysine 40 serves as the catalytic Proton acceptor; specific for D-alanine. Lysine 40 bears the N6-(pyridoxal phosphate)lysine mark. Arginine 136 is a binding site for substrate. The active-site Proton acceptor; specific for L-alanine is tyrosine 263. Residue methionine 310 coordinates substrate.

It belongs to the alanine racemase family. Pyridoxal 5'-phosphate serves as cofactor.

The catalysed reaction is L-alanine = D-alanine. Its pathway is amino-acid biosynthesis; D-alanine biosynthesis; D-alanine from L-alanine: step 1/1. Its function is as follows. Catalyzes the interconversion of L-alanine and D-alanine. May also act on other amino acids. This Streptococcus pneumoniae (strain Taiwan19F-14) protein is Alanine racemase (alr).